Consider the following 470-residue polypeptide: Dendritic cell-specific transmembrane protein (470 aa).

Topologically, residues methionine 1 to leucine 33 are cytoplasmic. The helical transmembrane segment at glycine 34–isoleucine 54 threads the bilayer. Leucine 55 is a topological domain (extracellular). The helical transmembrane segment at proline 56–lysine 76 threads the bilayer. Over arginine 77–alanine 97 the chain is Cytoplasmic. Residues leucine 98 to phenylalanine 118 form a helical membrane-spanning segment. The Extracellular segment spans residues arginine 119 to serine 209. Residues valine 210–phenylalanine 230 form a helical membrane-spanning segment. At leucine 231–threonine 292 the chain is on the cytoplasmic side. The helical transmembrane segment at leucine 293–valine 313 threads the bilayer. Residues aspartate 314–threonine 376 are Extracellular-facing. A helical membrane pass occupies residues tryptophan 377–leucine 397. Residues methionine 398 to leucine 470 lie on the Cytoplasmic side of the membrane.

As to quaternary structure, interacts with CREB3. Monomer. Homodimer. Isoform 1 interacts (via the C-terminus cytoplasmic tail) with OS9 isoform 1 (via the C-terminus tail); the interaction induces DCSTAMP redistribution to the endoplasmic reticulum-Golgi intermediate compartment. Isoform 1 interacts (via the C-terminus cytoplasmic tail) with OS9 isoform 2 (via the C-terminus tail). Glycosylated. In terms of tissue distribution, expressed in macrophages and bone marrow dendritic cells (BM-DC). Weakly expressed in the spleen and lymph node. Highly expressed in multi-nuclear osteoclasts compared to mono-nuclear macrophages. Expressed in foreign body giant cells (FBGCs). Isoform 1 and isoform 2 are expressed in osteoclasts.

The protein localises to the cell membrane. It localises to the endoplasmic reticulum membrane. The protein resides in the endoplasmic reticulum-Golgi intermediate compartment membrane. Its subcellular location is the endosome. Its function is as follows. Probable cell surface receptor that plays several roles in cellular fusion, cell differentiation, bone and immune homeostasis. Plays a role in TNFSF11-mediated osteoclastogenesis. Cooperates with OCSTAMP in modulating cell-cell fusion in both osteoclasts and foreign body giant cells (FBGCs). Participates in osteoclast bone resorption. Involved in inducing the expression of tartrate-resistant acid phosphatase in osteoclast precursors. Plays a role in haematopoietic stem cell differentiation of bone marrow cells toward the myeloid lineage. Inhibits the development of neutrophilic granulocytes. Plays also a role in the regulation of dendritic cell (DC) antigen presentation activity by controlling phagocytic activity. Involved in the maintenance of immune self-tolerance and avoidance of autoimmune reactions. The sequence is that of Dendritic cell-specific transmembrane protein (Dcstamp) from Mus musculus (Mouse).